The chain runs to 166 residues: MSEAAIAKKAEIVKQTTDMLNAAQSAIVVDYRGLTVAEVTDLRKQLRDAGIQMSVIKNKILDRAVEGTDYEDLRSTFVGPTAVAFSDEDPIAPAKILKKFADDHDALEIKGGFIEKSVKTLDEINEYANMPGREELLSMLASALQDPMRKIARAVKAIADKEDEAA.

This sequence belongs to the universal ribosomal protein uL10 family. As to quaternary structure, part of the ribosomal stalk of the 50S ribosomal subunit. The N-terminus interacts with L11 and the large rRNA to form the base of the stalk. The C-terminus forms an elongated spine to which L12 dimers bind in a sequential fashion forming a multimeric L10(L12)X complex.

Its function is as follows. Forms part of the ribosomal stalk, playing a central role in the interaction of the ribosome with GTP-bound translation factors. This chain is Large ribosomal subunit protein uL10, found in Limosilactobacillus reuteri (strain DSM 20016) (Lactobacillus reuteri).